The chain runs to 494 residues: Amidophosphoribosyltransferase (494 aa).

Residues 1–10 (MFNYSGLNEE) constitute a propeptide that is removed on maturation. The active-site Nucleophile is Cys11. A Glutamine amidotransferase type-2 domain is found at 11 to 231 (CGVFGIWNHP…AGEYVVINDK (221 aa)). Mg(2+) is bound by residues Ser294, Asp356, and Asp357.

The protein in the C-terminal section; belongs to the purine/pyrimidine phosphoribosyltransferase family. Mg(2+) is required as a cofactor.

The catalysed reaction is 5-phospho-beta-D-ribosylamine + L-glutamate + diphosphate = 5-phospho-alpha-D-ribose 1-diphosphate + L-glutamine + H2O. The protein operates within purine metabolism; IMP biosynthesis via de novo pathway; N(1)-(5-phospho-D-ribosyl)glycinamide from 5-phospho-alpha-D-ribose 1-diphosphate: step 1/2. Catalyzes the formation of phosphoribosylamine from phosphoribosylpyrophosphate (PRPP) and glutamine. The polypeptide is Amidophosphoribosyltransferase (Staphylococcus aureus (strain Mu50 / ATCC 700699)).